We begin with the raw amino-acid sequence, 187 residues long: MNYFDNKIDQFATYLQKRNNLDHIQFLQVRLGMQVLAKNIGKLIVMYTIAYILNIFIFTLITNISFYLIRRYAHGAHAPSSFWCYIESITLFIVLPLLVLHFHINETLMMFLALISVGVVIKYAPAATKKKPIPARLVKQKRYFSIIISTILFIITLFVKEPYTQFIQLGIIIQAITLLPIYYSKED.

Transmembrane regions (helical) follow at residues 49-69 (IAYI…FYLI), 82-102 (FWCY…VLHF), 107-127 (TLMM…APAA), 143-163 (YFSI…KEPY), and 164-184 (TQFI…IYYS).

It belongs to the AgrB family.

It localises to the cell membrane. Essential for the production of a quorum sensing system signal molecule, the autoinducing peptide (AIP). This quorum sensing system is responsible for the regulation of the expression of virulence factor genes. Involved in the proteolytic processing of AgrD, the precursor of AIP. The protein is Accessory gene regulator protein B of Staphylococcus aureus (strain MW2).